We begin with the raw amino-acid sequence, 395 residues long: RNA demethylase ALKBH5 (395 aa).

Disordered regions lie at residues 1-28 (MAAA…AGSR) and 47-83 (AAEP…EEEA). Residue Ala2 is modified to N-acetylalanine. A Glycyl lysine isopeptide (Lys-Gly) (interchain with G-Cter in ubiquitin) cross-link involves residue Lys58. Positions 60 to 83 (KYQEDSDPERSDYEEHQLQKEEEA) are enriched in basic and acidic residues. Ser65 and Ser70 each carry phosphoserine. Positions 68–117 (ERSDYEEHQLQKEEEARKVKSGIRQIRLFSQDECSKIEARIDEVVSRAEK) form a coiled coil. Position 72 is a phosphotyrosine (Tyr72). A Glycyl lysine isopeptide (Lys-Gly) (interchain with G-Cter in SUMO1) cross-link involves residue Lys87. The residue at position 88 (Ser88) is a Phosphoserine. Lys133 bears the N6-acetyllysine mark. Residue Tyr140 is part of the active site. The 2-oxoglutarate site is built by Asn194, Tyr196, and His205. The cysteines at positions 231 and 268 are disulfide-linked. Lys236 carries the N6-acetyllysine modification. 2-oxoglutarate-binding residues include His267 and Arg278. The segment at 294–395 (ETKSLSSSTL…PTRKVKMRRH (102 aa)) is disordered. Positions 296-306 (KSLSSSTLPPS) are enriched in low complexity. Lys322 is covalently cross-linked (Glycyl lysine isopeptide (Lys-Gly) (interchain with G-Cter in SUMO1)). Position 326 is a phosphoserine (Ser326). Residue Lys329 forms a Glycyl lysine isopeptide (Lys-Gly) (interchain with G-Cter in SUMO2) linkage. A compositionally biased stretch (basic and acidic residues) spans 329–350 (KADPDAAHRPRILEMDKEENRR). An Omega-N-methylarginine modification is found at Arg360. A phosphoserine mark is found at Ser362, Ser372, Ser375, and Ser385.

It belongs to the alkB family. In terms of assembly, monomer. Interacts with RBM33; promoting desumoylation by SENP1 and recruitment to N(6)-methyladenosine-containing mRNAs. Interacts (when acetylated by KAT8) with PSPC1; interaction facilitates recognition of N(6)-methyladenosine (m6A) mRNA. Fe(2+) is required as a cofactor. In terms of processing, phosphorylated at Ser-88 and Ser-326 in response to reactive oxygen species (ROS), promoting sumoylation and inactivation. Post-translationally, acetylated by KAT8 at Lys-236, promoting interaction with PSPC1, thereby facilitating recognition of N(6)-methyladenosine (m6A) mRNA by ALKBH5. Deacetylated at Lys-236 by HDAC7. Sumoylated at Lys-87 and Lys-322 by PIAS4 following phosphorylation at Ser-88 and Ser-326 in response to reactive oxygen species (ROS), inhibiting the RNA demethylase activity. Desumoylated by SENP1; relieving RNA demethylase inhibition, leading to N(6)-methyladenosine-containing mRNAs demethylation. In terms of processing, ubiquitinated at Lys-58 via 'Lys-48'-linked polyubiquitin chain, leading to its degradation by the proteasome. Deubiquitinated at Lys-58 by USP9X, promoting its stabilizazion.

The protein localises to the nucleus speckle. The catalysed reaction is an N(6)-methyladenosine in mRNA + 2-oxoglutarate + O2 = an adenosine in mRNA + formaldehyde + succinate + CO2. Its activity is regulated as follows. RNA demethylase activity is inhibited following sumoylation. Inhibition is relieved following desumoylation. In terms of biological role, dioxygenase that specifically demethylates N(6)-methyladenosine (m6A) RNA, the most prevalent internal modification of messenger RNA (mRNA) in higher eukaryotes. Demethylates RNA by oxidative demethylation, which requires molecular oxygen, alpha-ketoglutarate and iron. Demethylation of m6A mRNA affects mRNA processing, translation and export. Can also demethylate N(6)-methyladenosine in single-stranded DNA (in vitro). Required for the late meiotic and haploid phases of spermatogenesis by mediating m6A demethylation in spermatocytes and round spermatids: m6A demethylation of target transcripts is required for correct splicing and the production of longer 3'-UTR mRNAs in male germ cells. Involved in paraspeckle assembly, a nuclear membraneless organelle, by undergoing liquid-liquid phase separation. Paraspeckle assembly is coupled with m6A demethylation of RNAs, such as NEAT1 non-coding RNA. Also acts as a negative regulator of T-cell development: inhibits gamma-delta T-cell proliferation via demethylation of JAG1 and NOTCH2 transcripts. Inhibits regulatory T-cell (Treg) recruitment by mediating demethylation and destabilization of CCL28 mRNAs. In Rattus norvegicus (Rat), this protein is RNA demethylase ALKBH5 (Alkbh5).